Here is a 156-residue protein sequence, read N- to C-terminus: Small ribosomal subunit protein uS7 (156 aa).

The protein belongs to the universal ribosomal protein uS7 family. As to quaternary structure, part of the 30S ribosomal subunit. Contacts proteins S9 and S11.

Its function is as follows. One of the primary rRNA binding proteins, it binds directly to 16S rRNA where it nucleates assembly of the head domain of the 30S subunit. Is located at the subunit interface close to the decoding center, probably blocks exit of the E-site tRNA. The protein is Small ribosomal subunit protein uS7 of Micrococcus luteus (strain ATCC 4698 / DSM 20030 / JCM 1464 / CCM 169 / CCUG 5858 / IAM 1056 / NBRC 3333 / NCIMB 9278 / NCTC 2665 / VKM Ac-2230) (Micrococcus lysodeikticus).